The sequence spans 394 residues: 3-phenylpropionate/cinnamic acid dioxygenase ferredoxin--NAD(+) reductase component (394 aa).

Thr5–Lys36 is an FAD binding site. Arg146–Glu174 contacts NAD(+).

The protein belongs to the bacterial ring-hydroxylating dioxygenase ferredoxin reductase family. In terms of assembly, this dioxygenase system consists of four proteins: the two subunits of the hydroxylase component (HcaE and HcaF), a ferredoxin (HcaC) and a ferredoxin reductase (HcaD). The cofactor is FAD.

The enzyme catalyses 2 reduced [2Fe-2S]-[ferredoxin] + NAD(+) + H(+) = 2 oxidized [2Fe-2S]-[ferredoxin] + NADH. It participates in aromatic compound metabolism; 3-phenylpropanoate degradation. Its function is as follows. Part of the multicomponent 3-phenylpropionate dioxygenase, that converts 3-phenylpropionic acid (PP) and cinnamic acid (CI) into 3-phenylpropionate-dihydrodiol (PP-dihydrodiol) and cinnamic acid-dihydrodiol (CI-dihydrodiol), respectively. This is 3-phenylpropionate/cinnamic acid dioxygenase ferredoxin--NAD(+) reductase component from Photorhabdus laumondii subsp. laumondii (strain DSM 15139 / CIP 105565 / TT01) (Photorhabdus luminescens subsp. laumondii).